Here is a 319-residue protein sequence, read N- to C-terminus: Tryptophan--tRNA ligase (319 aa).

Residues 8-10 (QPS) and 16-17 (GN) each bind ATP. The 'HIGH' region signature appears at 9–17 (PSGDLHIGN). Position 131 (aspartate 131) interacts with L-tryptophan. Residues 143–145 (GKD), valine 182, and 189–193 (KMSKS) each bind ATP. The 'KMSKS' region signature appears at 189-193 (KMSKS).

Belongs to the class-I aminoacyl-tRNA synthetase family. As to quaternary structure, homodimer.

It is found in the cytoplasm. The catalysed reaction is tRNA(Trp) + L-tryptophan + ATP = L-tryptophyl-tRNA(Trp) + AMP + diphosphate + H(+). Catalyzes the attachment of tryptophan to tRNA(Trp). This is Tryptophan--tRNA ligase from Campylobacter jejuni subsp. jejuni serotype O:2 (strain ATCC 700819 / NCTC 11168).